A 143-amino-acid polypeptide reads, in one-letter code: Large ribosomal subunit protein uL11 (143 aa).

This sequence belongs to the universal ribosomal protein uL11 family. Part of the ribosomal stalk of the 50S ribosomal subunit. Interacts with L10 and the large rRNA to form the base of the stalk. L10 forms an elongated spine to which L12 dimers bind in a sequential fashion forming a multimeric L10(L12)X complex. One or more lysine residues are methylated.

Forms part of the ribosomal stalk which helps the ribosome interact with GTP-bound translation factors. This is Large ribosomal subunit protein uL11 from Paraburkholderia phymatum (strain DSM 17167 / CIP 108236 / LMG 21445 / STM815) (Burkholderia phymatum).